The chain runs to 523 residues: 2-hydroxyisoflavanone synthase (523 aa).

The helical transmembrane segment at 2-22 threads the bilayer; it reads LVELAITLLVIALFIHLRPTP. Cysteine 450 is a heme binding site.

The protein belongs to the cytochrome P450 family. The cofactor is heme.

The protein localises to the microsome membrane. The catalysed reaction is (2S)-liquiritigenin + reduced [NADPH--hemoprotein reductase] + O2 = (2R,3S)-2,4',7-trihydroxyisoflavanone + oxidized [NADPH--hemoprotein reductase] + H2O + H(+). It carries out the reaction (2S)-naringenin + reduced [NADPH--hemoprotein reductase] + O2 = 2-hydroxy-2,3-dihydrogenistein + oxidized [NADPH--hemoprotein reductase] + H2O + H(+). In terms of biological role, 2-hydroxyisoflavanone synthase, which catalyzes the hydroxylation associated with 1,2-aryl migration of flavanones. Converts liquiritigenin and naringenin into highly unstable precursors of the isoflavones daidzein and genistein. The protein is 2-hydroxyisoflavanone synthase (CYP93C2) of Glycyrrhiza uralensis (Chinese licorice).